Reading from the N-terminus, the 504-residue chain is Maturase K (504 aa).

Belongs to the intron maturase 2 family. MatK subfamily.

It is found in the plastid. Its subcellular location is the chloroplast. Usually encoded in the trnK tRNA gene intron. Probably assists in splicing its own and other chloroplast group II introns. The protein is Maturase K of Quercus rubra (Northern red oak).